The chain runs to 78 residues: UPF0291 protein LBUL_1264 (78 aa).

Belongs to the UPF0291 family.

The protein resides in the cytoplasm. This chain is UPF0291 protein LBUL_1264, found in Lactobacillus delbrueckii subsp. bulgaricus (strain ATCC BAA-365 / Lb-18).